A 421-amino-acid polypeptide reads, in one-letter code: Inhibitor of growth protein 3 (421 aa).

The interval 129–163 (PSQPVNNHHAHSHTPVEKRKYNPTSHHAAADHIPE) is disordered. Glycyl lysine isopeptide (Lys-Gly) (interchain with G-Cter in SUMO2) cross-links involve residues Lys-148, Lys-165, and Lys-167. N6-acetyllysine is present on Lys-181. Lys-256 is covalently cross-linked (Glycyl lysine isopeptide (Lys-Gly) (interchain with G-Cter in SUMO2)). Position 264 is an N6-acetyllysine (Lys-264). The segment covering 286–296 (TQNASSSATDS) has biased composition (polar residues). The disordered stretch occupies residues 286 to 323 (TQNASSSATDSRSGRKSKNNTKSSSQQSSSSSSSSSSS). Positions 308 to 323 (SSSQQSSSSSSSSSSS) are enriched in low complexity. The segment at 363–412 (PRYCICNQVSYGEMVGCDNQDCPIEWFHYGCVGLTEAPKGKWFCPQCTAA) adopts a PHD-type zinc-finger fold. Cys-366, Cys-368, Cys-379, Cys-384, His-390, Cys-393, Cys-406, and Cys-409 together coordinate Zn(2+).

Belongs to the ING family. As to quaternary structure, interacts with H3K4me3 and to a lesser extent with H3K4me2. Component of the NuA4 histone acetyltransferase complex which contains the catalytic subunit KAT5/TIP60 and the subunits EP400, TRRAP/PAF400, BRD8/SMAP, EPC1, DMAP1/DNMAP1, RUVBL1/TIP49, RUVBL2, ING3, actin, ACTL6A/BAF53A, MORF4L1/MRG15, MORF4L2/MRGX, MRGBP, YEATS4/GAS41, VPS72/YL1 and MEAF6. The NuA4 complex interacts with MYC. HTATTIP/TIP60, EPC1, and ING3 together constitute a minimal HAT complex termed Piccolo NuA4. Component of a SWR1-like complex.

It is found in the nucleus. Its function is as follows. Component of the NuA4 histone acetyltransferase (HAT) complex which is involved in transcriptional activation of select genes principally by acetylation of nucleosomal histones H4 and H2A. This modification may both alter nucleosome - DNA interactions and promote interaction of the modified histones with other proteins which positively regulate transcription. This complex may be required for the activation of transcriptional programs associated with oncogene and proto-oncogene mediated growth induction, tumor suppressor mediated growth arrest and replicative senescence, apoptosis, and DNA repair. NuA4 may also play a direct role in DNA repair when directly recruited to sites of DNA damage. Component of a SWR1-like complex that specifically mediates the removal of histone H2A.Z/H2AZ1 from the nucleosome. This Mus musculus (Mouse) protein is Inhibitor of growth protein 3 (Ing3).